Consider the following 172-residue polypeptide: Early nodulin-like protein 17 (172 aa).

An N-terminal signal peptide occupies residues 1 to 26 (MARFTVLITAVVLAFLMAAPMPGVTA). The Phytocyanin domain occupies 27-127 (KKYTVGENKF…GMKLSVKVEK (101 aa)). N42, N73, N88, and N101 each carry an N-linked (GlcNAc...) asparagine glycan. Cysteines 80 and 115 form a disulfide. G141 carries GPI-anchor amidated glycine lipidation. A propeptide spans 142 to 172 (SVSMVTGLAQFMIPVSLFAFPAMWDVISRMW) (removed in mature form).

Belongs to the early nodulin-like (ENODL) family.

Its subcellular location is the cell membrane. May act as a carbohydrate transporter. The chain is Early nodulin-like protein 17 from Arabidopsis thaliana (Mouse-ear cress).